A 315-amino-acid polypeptide reads, in one-letter code: Methionyl-tRNA formyltransferase (315 aa).

113-116 (SLLP) is a (6S)-5,6,7,8-tetrahydrofolate binding site.

Belongs to the Fmt family.

It catalyses the reaction L-methionyl-tRNA(fMet) + (6R)-10-formyltetrahydrofolate = N-formyl-L-methionyl-tRNA(fMet) + (6S)-5,6,7,8-tetrahydrofolate + H(+). In terms of biological role, attaches a formyl group to the free amino group of methionyl-tRNA(fMet). The formyl group appears to play a dual role in the initiator identity of N-formylmethionyl-tRNA by promoting its recognition by IF2 and preventing the misappropriation of this tRNA by the elongation apparatus. This chain is Methionyl-tRNA formyltransferase, found in Escherichia coli O6:K15:H31 (strain 536 / UPEC).